Reading from the N-terminus, the 296-residue chain is F-box only protein 2 (296 aa).

The interval 1–41 is disordered; it reads MDGDGDPESVGQPEEASPEEQPEEASAEEERPEDQQEEEAA. Over residues 16–40 the composition is skewed to acidic residues; that stretch reads ASPEEQPEEASAEEERPEDQQEEEA. The region spanning 44-91 is the F-box domain; it reads AAYLDELPEPLLLRVLAALPAAELVQACRLVCLRWKELVDGAPLWLLK. The region spanning 113 to 296 is the FBA domain; sequence FYFLSKRRRN…VTNSSVWVEP (184 aa). A carbohydrate is bound by residues 210-212 and 278-279; these read RSD and YW.

Component of the SCF(FBXO2) complex consisting of CUL1, RBX1, SKP1 and FBXO2. Predominantly detected as heterodimer with SKP1; the heterodimer with SKP1 is not part of the SCF(FBXO2) complex.

It localises to the cytoplasm. The protein resides in the microsome membrane. Its pathway is protein modification; protein ubiquitination. Substrate recognition component of a SCF (SKP1-CUL1-F-box protein) E3 ubiquitin-protein ligase complex that mediates the ubiquitination and subsequent proteasomal degradation of target proteins. Involved in the endoplasmic reticulum-associated degradation pathway (ERAD) for misfolded lumenal proteins by recognizing and binding sugar chains on unfolded glycoproteins that are retrotranslocated into the cytosol and promoting their ubiquitination and subsequent degradation. Prevents formation of cytosolic aggregates of unfolded glycoproteins that have been retrotranslocated into the cytosol. Able to recognize and bind denatured glycoproteins, preferentially those of the high-mannose type. This chain is F-box only protein 2 (FBXO2), found in Homo sapiens (Human).